We begin with the raw amino-acid sequence, 142 residues long: uncharacterized protein (142 aa).

This is an uncharacterized protein from Methanocaldococcus jannaschii (strain ATCC 43067 / DSM 2661 / JAL-1 / JCM 10045 / NBRC 100440) (Methanococcus jannaschii).